The sequence spans 395 residues: DNA polymerase IV (395 aa).

The UmuC domain maps to 7–187; the sequence is FFHVDIDAFF…LPLKDVWGVG (181 aa). Residues Asp-11 and Asp-105 each contribute to the Mg(2+) site. Glu-106 is a catalytic residue.

This sequence belongs to the DNA polymerase type-Y family. In terms of assembly, monomer. The cofactor is Mg(2+).

The protein resides in the cytoplasm. It carries out the reaction DNA(n) + a 2'-deoxyribonucleoside 5'-triphosphate = DNA(n+1) + diphosphate. Functionally, poorly processive, error-prone DNA polymerase involved in untargeted mutagenesis. Copies undamaged DNA at stalled replication forks, which arise in vivo from mismatched or misaligned primer ends. These misaligned primers can be extended by PolIV. Exhibits no 3'-5' exonuclease (proofreading) activity. May be involved in translesional synthesis, in conjunction with the beta clamp from PolIII. The sequence is that of DNA polymerase IV from Treponema denticola (strain ATCC 35405 / DSM 14222 / CIP 103919 / JCM 8153 / KCTC 15104).